The following is a 227-amino-acid chain: Germin-like protein subfamily 1 member 3 (227 aa).

Residues 1-24 (MKYPFQCFLAKIILLALASSFVSC) form the signal peptide. A disulfide bond links C34 and C50. One can recognise a Cupin type-1 domain in the interval 64 to 212 (SGLNIPGNTN…AFALDINIVR (149 aa)). Mn(2+) is bound by residues H109, H111, and E116. An N-linked (GlcNAc...) asparagine glycan is attached at N136. H160 contacts Mn(2+).

Belongs to the germin family. Oligomer (believed to be a pentamer but probably hexamer).

Its subcellular location is the secreted. The protein localises to the extracellular space. It is found in the apoplast. May play a role in plant defense. Probably has no oxalate oxidase activity even if the active site is conserved. The chain is Germin-like protein subfamily 1 member 3 from Arabidopsis thaliana (Mouse-ear cress).